A 466-amino-acid chain; its full sequence is ATP synthase subunit beta (466 aa).

148-155 (GGAGVGKT) provides a ligand contact to ATP.

Belongs to the ATPase alpha/beta chains family. F-type ATPases have 2 components, CF(1) - the catalytic core - and CF(0) - the membrane proton channel. CF(1) has five subunits: alpha(3), beta(3), gamma(1), delta(1), epsilon(1). CF(0) has three main subunits: a(1), b(2) and c(9-12). The alpha and beta chains form an alternating ring which encloses part of the gamma chain. CF(1) is attached to CF(0) by a central stalk formed by the gamma and epsilon chains, while a peripheral stalk is formed by the delta and b chains.

It is found in the cell inner membrane. The catalysed reaction is ATP + H2O + 4 H(+)(in) = ADP + phosphate + 5 H(+)(out). In terms of biological role, produces ATP from ADP in the presence of a proton gradient across the membrane. The catalytic sites are hosted primarily by the beta subunits. This chain is ATP synthase subunit beta, found in Xylella fastidiosa (strain 9a5c).